The primary structure comprises 650 residues: Acetyl-coenzyme A synthetase (650 aa).

CoA-binding positions include 190–193, T308, and N332; that span reads RGGR. ATP contacts are provided by residues 384–386, 408–413, D497, and R512; these read GEP and DTWWQT. CoA is bound at residue S520. ATP is bound at residue R523. 3 residues coordinate Mg(2+): V534, H536, and V539. R581 is a CoA binding site. K606 bears the N6-acetyllysine mark.

Belongs to the ATP-dependent AMP-binding enzyme family. It depends on Mg(2+) as a cofactor. Acetylated. Deacetylation by the SIR2-homolog deacetylase activates the enzyme.

The enzyme catalyses acetate + ATP + CoA = acetyl-CoA + AMP + diphosphate. Functionally, catalyzes the conversion of acetate into acetyl-CoA (AcCoA), an essential intermediate at the junction of anabolic and catabolic pathways. AcsA undergoes a two-step reaction. In the first half reaction, AcsA combines acetate with ATP to form acetyl-adenylate (AcAMP) intermediate. In the second half reaction, it can then transfer the acetyl group from AcAMP to the sulfhydryl group of CoA, forming the product AcCoA. The polypeptide is Acetyl-coenzyme A synthetase (Bradyrhizobium sp. (strain ORS 278)).